Here is a 189-residue protein sequence, read N- to C-terminus: Probable nicotinate-nucleotide adenylyltransferase (189 aa).

It belongs to the NadD family.

It carries out the reaction nicotinate beta-D-ribonucleotide + ATP + H(+) = deamido-NAD(+) + diphosphate. It participates in cofactor biosynthesis; NAD(+) biosynthesis; deamido-NAD(+) from nicotinate D-ribonucleotide: step 1/1. Functionally, catalyzes the reversible adenylation of nicotinate mononucleotide (NaMN) to nicotinic acid adenine dinucleotide (NaAD). The chain is Probable nicotinate-nucleotide adenylyltransferase from Staphylococcus aureus (strain N315).